Consider the following 88-residue polypeptide: MLDTKFDELMDFPCAFPFKVVGEAHETLTDKVVAVVQKHAPGDYSPSTKTSSKGSYHSITIRVTVTSKDHIEILYTELAAIEGVRRVL.

It belongs to the UPF0250 family.

The sequence is that of UPF0250 protein Sbal_3280 from Shewanella baltica (strain OS155 / ATCC BAA-1091).